The following is a 500-amino-acid chain: Glycerol kinase (500 aa).

T12 lines the ADP pocket. 3 residues coordinate ATP: T12, T13, and S14. T12 serves as a coordination point for sn-glycerol 3-phosphate. R16 contacts ADP. Positions 82, 83, 135, and 245 each coordinate sn-glycerol 3-phosphate. Glycerol is bound by residues R82, E83, Y135, D245, and Q246. The ADP site is built by T267 and G310. 4 residues coordinate ATP: T267, G310, Q314, and G411. ADP is bound by residues G411 and N415.

The protein belongs to the FGGY kinase family. As to quaternary structure, homotetramer and homodimer (in equilibrium).

The enzyme catalyses glycerol + ATP = sn-glycerol 3-phosphate + ADP + H(+). It functions in the pathway polyol metabolism; glycerol degradation via glycerol kinase pathway; sn-glycerol 3-phosphate from glycerol: step 1/1. With respect to regulation, activated by phosphorylation and inhibited by fructose 1,6-bisphosphate (FBP). In terms of biological role, key enzyme in the regulation of glycerol uptake and metabolism. Catalyzes the phosphorylation of glycerol to yield sn-glycerol 3-phosphate. In Clostridium perfringens (strain 13 / Type A), this protein is Glycerol kinase.